The following is a 51-amino-acid chain: Ribosome biogenesis protein Nop10 (51 aa).

This sequence belongs to the NOP10 family.

Functionally, involved in ribosome biogenesis; more specifically in 18S rRNA pseudouridylation and in cleavage of pre-rRNA. The polypeptide is Ribosome biogenesis protein Nop10 (Methanococcus maripaludis (strain C5 / ATCC BAA-1333)).